Consider the following 337-residue polypeptide: 5-formaminoimidazole-4-carboxamide-1-(beta)-D-ribofuranosyl 5'-monophosphate synthetase (337 aa).

5-amino-1-(5-phospho-beta-D-ribosyl)imidazole-4-carboxamide-binding residues include H14 and S74. Residues 81–328 (VELVERMKVP…IAREIRLAIE (248 aa)) enclose the ATP-grasp domain. Residues 125-185 (PDDI…VPVY) and E207 contribute to the ATP site. N235 is a 5-amino-1-(5-phospho-beta-D-ribosyl)imidazole-4-carboxamide binding site. Residues E273 and E286 each coordinate Mg(2+).

Belongs to the phosphohexose mutase family. Requires Mg(2+) as cofactor. The cofactor is Mn(2+).

The catalysed reaction is 5-amino-1-(5-phospho-beta-D-ribosyl)imidazole-4-carboxamide + formate + ATP = 5-formamido-1-(5-phospho-D-ribosyl)imidazole-4-carboxamide + ADP + phosphate. The protein operates within purine metabolism; IMP biosynthesis via de novo pathway; 5-formamido-1-(5-phospho-D-ribosyl)imidazole-4-carboxamide from 5-amino-1-(5-phospho-D-ribosyl)imidazole-4-carboxamide (formate route): step 1/1. In terms of biological role, catalyzes the ATP- and formate-dependent formylation of 5-aminoimidazole-4-carboxamide-1-beta-d-ribofuranosyl 5'-monophosphate (AICAR) to 5-formaminoimidazole-4-carboxamide-1-beta-d-ribofuranosyl 5'-monophosphate (FAICAR) in the absence of folates. This chain is 5-formaminoimidazole-4-carboxamide-1-(beta)-D-ribofuranosyl 5'-monophosphate synthetase, found in Pyrococcus abyssi (strain GE5 / Orsay).